The chain runs to 492 residues: MGRKKIQITRIMDERNRQVTFTKRKFGLMKKAYELSVLCDCEIALIIFNSSNKLFQYASTDMDKVLLKYTEYNEPHESRTNSDIVEALNKKEHRGCDSPDPDTSYVLTPHTEEKYKKINEEFDNMMRNHKIAPGLPPQNFSMSVTVPVTSPSALSYTNPGSSLVSPSLAASSALADTSMLSPPQATLHRNVSPGAPQRPPSTGSAGGMLSTSDLTVPNGAGSSPVGNGFVNSRASPNLIGTTGANSLGKVMPTKSPPPPGGGSLGMNSRKPDLRVVIPPSSKGMMPPLNTQRISSSQATQPLATPVVSVTTPSLPPQGLVYSAMPTAYNTDYSLTSADLSALQGFNSPGMLSLGQVSAWQQHHLGQAALNSLVAGGQLSQGSNLSINTNQNINIKSEPISPPRDRMTPSGFQQQQQPQPPPPPPQAPQPQPRQEVGRSPVDSLSSSSSSYDGSDREDPRGDFHSPVVLGRPPNSEDRESPSVKRMRMDAWVT.

The region spanning arginine 3 to tyrosine 57 is the MADS-box domain. The mef2-type DNA-binding region spans alanine 58–glutamate 86. A Phosphoserine; by CK2 modification is found at serine 59. Serine 98 is subject to Phosphoserine. The disordered stretch occupies residues proline 183–asparagine 227. Polar residues predominate over residues leucine 209–asparagine 227. Residue serine 235 is modified to Phosphoserine. The tract at residues threonine 242–lysine 270 is disordered. Lysine 249 is modified (N6-acetyllysine). Serine 255 bears the Phosphoserine mark. The required for interaction with MAPKs stretch occupies residues methionine 266 to glycine 283. Residues threonine 304 and threonine 311 each carry the phosphothreonine; by MAPK7 and MAPK14 modification. Serine 347 carries the phosphoserine; by MAPK7 modification. Polar residues predominate over residues serine 382–isoleucine 394. The segment at serine 382–threonine 492 is disordered. Lysine 395 is modified (N6-acetyllysine; alternate). Lysine 395 participates in a covalent cross-link: Glycyl lysine isopeptide (Lys-Gly) (interchain with G-Cter in SUMO); alternate. Serine 400 carries the phosphoserine; by CDK5 modification. Threonine 407 is subject to Phosphothreonine. Positions proline 417–glutamine 430 are enriched in pro residues. Serine 438 carries the post-translational modification Phosphoserine; by MAPK. Over residues serine 438–aspartate 451 the composition is skewed to low complexity. Basic and acidic residues-rich tracts occupy residues glycine 452–phenylalanine 462 and asparagine 473–threonine 492.

In terms of assembly, binds DNA as a homo- or heterodimer. Dimerizes with MEF2D. Interacts with HDAC7. Interacts with PIAS1; the interaction enhances sumoylation. Interacts with HDAC4, HDAC9 and SLC2A4RG. Interacts (via the N-terminal) with MAPK7; the interaction results in the phosphorylation and transcriptional activity of MEF2A. Post-translationally, constitutive phosphorylation on Ser-400 promotes Lys-395 sumoylation thus preventing acetylation at this site. Dephosphorylation on Ser-400 by PPP3CA upon neuron depolarization promotes a switch from sumoylation to acetylation on residue Lys-395 leading to inhibition of dendrite claw differentiation. Phosphorylation on Thr-304 and Thr-311 are the main sites involved in p38 MAPK signaling and activate transcription. Phosphorylated on these sites by MAPK14/p38alpha and MAPK11/p38beta, but not by MAPK13/p38delta nor by MAPK12/p38gamma. Phosphorylation on Ser-400 by CDK5 induced by neurotoxicity inhibits MEF2A transcriptional activation leading to apoptosis of cortical neurons. Phosphorylation on Thr-304, Thr-311 and Ser-347 can be induced by EGF. In terms of processing, sumoylation on Lys-395 is enhanced by PIAS1 and represses transcriptional activity. Phosphorylation on Ser-400 is required for sumoylation. Has no effect on nuclear location nor on DNA binding. Sumoylated with SUMO1 and, to a lesser extent with SUMO2 and SUMO3. PIASx facilitates sumoylation in postsynaptic dendrites in the cerebellar cortex and promotes their morphogenesis. Acetylation on Lys-395 activates transcriptional activity. Acetylated by p300 on several sites in diffentiating myocytes. Acetylation on Lys-4 increases DNA binding and transactivation. Hyperacetylation by p300 leads to enhanced cardiac myocyte growth and heart failure. Post-translationally, proteolytically cleaved in cerebellar granule neurons on several sites by caspase 3 and caspase 7 following neurotoxicity. Preferentially cleaves the CDK5-mediated hyperphosphorylated form which leads to neuron apoptosis and transcriptional inactivation.

It localises to the nucleus. In terms of biological role, transcriptional activator which binds specifically to the MEF2 element, 5'-YTA[AT](4)TAR-3', found in numerous muscle-specific genes. Also involved in the activation of numerous growth factor- and stress-induced genes. Mediates cellular functions not only in skeletal and cardiac muscle development, but also in neuronal differentiation and survival. Plays diverse roles in the control of cell growth, survival and apoptosis via p38 MAPK signaling in muscle-specific and/or growth factor-related transcription. In cerebellar granule neurons, phosphorylated and sumoylated MEF2A represses transcription of NUR77 promoting synaptic differentiation. Associates with chromatin to the ZNF16 promoter. The chain is Myocyte-specific enhancer factor 2A (MEF2A) from Bos taurus (Bovine).